Here is a 584-residue protein sequence, read N- to C-terminus: A-type ATP synthase subunit A (584 aa).

Position 233 to 240 (233 to 240 (GPFGSGKT)) interacts with ATP.

The protein belongs to the ATPase alpha/beta chains family. In terms of assembly, has multiple subunits with at least A(3), B(3), C, D, E, F, H, I and proteolipid K(x).

The protein localises to the cell membrane. It carries out the reaction ATP + H2O + 4 H(+)(in) = ADP + phosphate + 5 H(+)(out). Its function is as follows. Component of the A-type ATP synthase that produces ATP from ADP in the presence of a proton gradient across the membrane. The A chain is the catalytic subunit. The polypeptide is A-type ATP synthase subunit A (Methanobrevibacter smithii (strain ATCC 35061 / DSM 861 / OCM 144 / PS)).